Reading from the N-terminus, the 786-residue chain is Keratin, type I cytoskeletal 9 (786 aa).

A disordered region spans residues 1–21; the sequence is MNCRQFLSSHCSRDSSGGGGG. Residues 1–136 are head; it reads MNCRQFLSSH…SGAGGILGAD (136 aa). Ser-52 is modified (phosphoserine). The tract at residues 137–172 is coil 1A; sequence EKTTMQDLNSRLASYLDKVQALEDANKELESKIREW. The 313-residue stretch at 137–449 folds into the IF rod domain; sequence EKTTMQDLNS…SLLEGGQEDF (313 aa). The interval 173–191 is linker 1; it reads YDKQGSRTFHRDYSPYYDT. The segment at 192–283 is coil 1B; the sequence is IEDLKNQIVN…KNHEDEMSQL (92 aa). Residues 284 to 306 are linker 12; the sequence is TGQNSGDVNVEMNAAPGRDLTKI. Residues 307-445 are coil 2; that stretch reads LNDMREEYER…KTYRSLLEGG (139 aa). Residues 446–760 are tail; it reads QEDFESHESG…GGGSGSKGGS (315 aa). The interval 447–786 is disordered; that stretch reads EDFESHESGQ…DDTQGYHIQY (340 aa). 2 stretches are compositionally biased toward gly residues: residues 460–657 and 664–761; these read GSGG…GGSG and SSSG…GGSG. Positions 762 to 773 are enriched in low complexity; sequence RSSQVQSSSSKS.

The protein belongs to the intermediate filament family. Heterotetramer of two type I and two type II keratins.

May serve an important special function either in the mature palmar and plantar skin tissue or in the morphogenetic program of the formation of these tissues. Plays a role in keratin filament assembly. In Canis lupus familiaris (Dog), this protein is Keratin, type I cytoskeletal 9.